Here is a 194-residue protein sequence, read N- to C-terminus: Endo-1,4-beta-xylanase (194 aa).

N-acetylglycine is present on G1. The region spanning G1–A191 is the GH11 domain. E86 serves as the catalytic Nucleophile. C110 and C154 are disulfide-bonded. E178 serves as the catalytic Proton donor.

The protein belongs to the glycosyl hydrolase 11 (cellulase G) family.

It catalyses the reaction Endohydrolysis of (1-&gt;4)-beta-D-xylosidic linkages in xylans.. It participates in glycan degradation; xylan degradation. The chain is Endo-1,4-beta-xylanase from Byssochlamys spectabilis (Paecilomyces variotii).